A 164-amino-acid chain; its full sequence is Magnesium-dependent phosphatase 1 (164 aa).

The active-site Nucleophile is the Asp-11. Asp-11 serves as a coordination point for Mg(2+). Phosphate-binding residues include Leu-12 and Asp-13. Asp-13 provides a ligand contact to Mg(2+). Asp-13 serves as the catalytic Proton donor. Position 20 (Trp-20) interacts with substrate. Phosphate-binding residues include Ser-69, Arg-70, and Lys-100. Arg-70 is a binding site for substrate. Asp-123 provides a ligand contact to Mg(2+).

Belongs to the HAD-like hydrolase superfamily. It depends on Mg(2+) as a cofactor.

It carries out the reaction O-phospho-L-tyrosyl-[protein] + H2O = L-tyrosyl-[protein] + phosphate. Its activity is regulated as follows. Inhibited by vanadate and zinc, and slightly by calcium. Its function is as follows. Magnesium-dependent phosphatase which may act as a tyrosine phosphatase. This Mus musculus (Mouse) protein is Magnesium-dependent phosphatase 1 (Mdp1).